A 445-amino-acid polypeptide reads, in one-letter code: Tryptamine benzoyltransferase 1 (445 aa).

Active-site proton acceptor residues include histidine 150 and aspartate 382.

This sequence belongs to the plant acyltransferase family.

Its function is as follows. Hydroxycinnamoyl transferase that catalyzes the transfer of an acyl from benzoyl-CoA to tryptamine, to produce benzoyl tryptamine. Serotonin and tyramine serve as acyl acceptors in vitro. Can use p-coumaroyl-CoA, and to a lesser extent caffeoyl-CoA, as acyl donors. The chain is Tryptamine benzoyltransferase 1 from Oryza sativa subsp. japonica (Rice).